The following is a 406-amino-acid chain: Transforming growth factor beta regulator 1 (406 aa).

2 disordered regions span residues 1 to 28 and 109 to 144; these read MSVLSGLASEPRTPLSSKARMKRLPRKS and SSVGTMQGAGPSTGAEEPFAKKSKKEKKEKGKENSK. Serine 2 carries the N-acetylserine modification. At threonine 13 the chain carries Phosphothreonine. Basic and acidic residues predominate over residues 134–144; that stretch reads EKKEKGKENSK. The region spanning 177 to 236 is the FYR N-terminal domain; that stretch reads VFPIGLGGLTVYSLGEIITNRPGFHDENAIYPVGYCSTRVYASMKCPDQKCLYTCQIKDG. The FYR C-terminal domain occupies 237–316; that stretch reads GVQPQFEIVP…QNCVNYQWVK (80 aa).

This sequence belongs to the TBRG1 family. As to quaternary structure, interacts with CDKN2A and MDM2. Post-translationally, ubiquitinated; mediated by MDM2 and leading to its subsequent proteasomal degradation.

The protein resides in the nucleus. In terms of biological role, acts as a growth inhibitor. Can activate p53/TP53, causes G1 arrest and collaborates with CDKN2A to restrict proliferation, but does not require either protein to inhibit DNA synthesis. Redistributes CDKN2A into the nucleoplasm. Involved in maintaining chromosomal stability. This Mus musculus (Mouse) protein is Transforming growth factor beta regulator 1 (Tbrg1).